Here is a 392-residue protein sequence, read N- to C-terminus: D-amino-acid oxidase 2 (392 aa).

Positions 10, 13, 33, 34, 45, 46, 50, and 52 each coordinate FAD. 4 residues coordinate anthranilate: Phe56, Tyr245, Tyr262, and Arg311. Residues Tyr245, Tyr262, and Arg311 each contribute to the (R)-lactate site. Residues Arg311, Gly361, Ser362, Gly364, and Gln366 each coordinate FAD. An anthranilate-binding site is contributed by Ser362. Ser362 is a binding site for (R)-lactate. The short motif at 390-392 (AKL) is the Microbody targeting signal element.

It belongs to the DAMOX/DASOX family. Requires FAD as cofactor.

Its subcellular location is the peroxisome matrix. It catalyses the reaction a D-alpha-amino acid + O2 + H2O = a 2-oxocarboxylate + H2O2 + NH4(+). It carries out the reaction D-methionine + O2 + H2O = 4-methylsulfanyl-2-oxobutanoate + H2O2 + NH4(+). The enzyme catalyses D-serine + O2 + H2O = 3-hydroxypyruvate + H2O2 + NH4(+). The catalysed reaction is D-histidine + O2 + H2O = 3-(imidazol-5-yl)pyruvate + H2O2 + NH4(+). It catalyses the reaction D-proline + O2 = 1-pyrroline-2-carboxylate + H2O2. It carries out the reaction D-alanine + O2 + H2O = pyruvate + H2O2 + NH4(+). The enzyme catalyses D-leucine + O2 + H2O = 4-methyl-2-oxopentanoate + H2O2 + NH4(+). The catalysed reaction is D-valine + O2 + H2O = 3-methyl-2-oxobutanoate + H2O2 + NH4(+). Its function is as follows. Catalyzes the oxidative deamination of D-amino acids with broad substrate specificity. Enables the organism to utilize D-amino acids as a source of nutrients. Enables the organism to utilize D-alanine, D-cysteine, D-histidine, D-leucine, D-methionine, D-phenylalanine, D-proline, D-serine, D-threonine, D-aspartate and D-valine as a nitrogen source and may also contribute to utlization of D-tryptophan, D-tyrosine and D-asparagine as a nitrogen source. Protects the organism from the toxicity of D-amino acids, including from D-alanine. May play a role in its interaction with the host. The protein is D-amino-acid oxidase 2 of Cryptococcus deuterogattii (strain R265) (Cryptococcus gattii VGII (strain R265)).